Consider the following 437-residue polypeptide: MTEQAVRTYVLDTSVLLSDPWACTRFAEHEVVVPLVVISELEAKRHHHELGWFARQALRMFDDMRLEHGRLDQPVPVGTQGGTLHVELNHSDPSVLPAGFRNDSNDARILTVAANLAAEGKHVTLVSKDIPLRVKAGAVGLAADEYHAQDVVVSGWTGMTEMDVAGEDIDTLFADGEIDLAEARDLPCHTGIRLLGGTSHALGRVNAAKKVQLVRGDREVFGLRGRSAEQRVALDLLLDESVGIVSLGGKAGTGKSALALCAGLEAVLERRTQRKVVVFRPLYAVGGQDLGYLPGSESEKMGPWAQAVFDTLEGLASPAVLDEVLSRGMLEVLPLTHIRGRSLHDSFVIVDEAQSLERNVLLTVLSRLGAGSRVVLTHDVAQRDNLRVGRHDGVAAVIEKLKGHPLFAHVTLQRSERSPIAALVTEMLEEISPGALP.

Residues Arg7–Val134 enclose the PINc domain.

In the N-terminal section; belongs to the PINc/VapC protein family. It in the C-terminal section; belongs to the PhoH family. Interacts with antitoxin PhoAT. Requires Mg(2+) as cofactor.

It carries out the reaction n ATP + n H2O + wound RNA = n ADP + n phosphate + unwound RNA.. It catalyses the reaction ATP + H2O = ADP + phosphate + H(+). The enzyme catalyses GTP + H2O = GDP + phosphate + H(+). In terms of biological role, toxic component of a type II toxin-antitoxin (TA) system. The possible cognate antitoxin is PhoAT; the toxin gene can be expressed in the absence of the antitoxin gene in an endogenous mc(2)155 double deletion. Unwinds and/or cleaves 5'-tailed RNA in vitro that starts with 5'-AC, the reaction requires hydrolyzable ATP; double-stranded (ds)RNA and dsDNA are not unwound or cleaved. Has ATPase and GTPase activities. The sequence is that of Protein PhoH2 from Mycolicibacterium smegmatis (strain ATCC 700084 / mc(2)155) (Mycobacterium smegmatis).